A 535-amino-acid polypeptide reads, in one-letter code: RNA-splicing ligase RtcB homolog 1 (535 aa).

The span at 1–16 (MAKSRYSRKNKGKKLQ) shows a compositional bias: basic residues. The interval 1–29 (MAKSRYSRKNKGKKLQRVQENTVSTEEKS) is disordered. Mn(2+)-binding residues include Asp152, Cys155, His260, His292, and His383. 259 to 263 (NHYLE) contributes to the GMP binding site. GMP is bound by residues 383 to 384 (HN), 432 to 435 (GGSM), Ser439, 458 to 461 (HGAG), and Lys534. His458 serves as the catalytic GMP-histidine intermediate.

This sequence belongs to the RtcB family. In terms of assembly, catalytic component of the tRNA-splicing ligase complex. It depends on Mn(2+) as a cofactor.

The catalysed reaction is a 3'-end 3'-phospho-ribonucleotide-RNA + a 5'-end dephospho-ribonucleoside-RNA + GTP = a ribonucleotidyl-ribonucleotide-RNA + GMP + diphosphate. It carries out the reaction a 3'-end 2',3'-cyclophospho-ribonucleotide-RNA + a 5'-end dephospho-ribonucleoside-RNA + GTP + H2O = a ribonucleotidyl-ribonucleotide-RNA + GMP + diphosphate + H(+). Its function is as follows. Catalytic subunit of the tRNA-splicing ligase complex that acts by directly joining spliced tRNA halves to mature-sized tRNAs by incorporating the precursor-derived splice junction phosphate into the mature tRNA as a canonical 3',5'-phosphodiester. May act as an RNA ligase with broad substrate specificity, and may function toward other RNAs. The polypeptide is RNA-splicing ligase RtcB homolog 1 (Entamoeba dispar (strain ATCC PRA-260 / SAW760)).